Reading from the N-terminus, the 874-residue chain is Oxysterol-binding protein-related protein 5 (874 aa).

The tract at residues 1 to 71 is disordered; that stretch reads MKEEAFLRRR…PQTPGSATKV (71 aa). At S12 the chain carries Phosphoserine. Residues 93–123 adopt a coiled-coil conformation; sequence VSKKDALKAQKENYRQEKKRATKQLFSALTD. The region spanning 126 to 243 is the PH domain; the sequence is VVIMADSLKI…WLDALELALR (118 aa). Disordered stretches follow at residues 255–277 and 299–338; these read QGRD…GLPT and FSDK…GPWR. Polar residues predominate over residues 261 to 277; it reads QGSSPDASPSSLYGLPT. Positions 299-308 are enriched in basic and acidic residues; that stretch reads FSDKSERENA. Residues 383 to 388, 445 to 448, and 477 to 478 contribute to the a 1,2-diacyl-sn-glycero-3-phospho-(1D-myo-inositol 4-phosphate) site; these read LSRVVL, KPYN, and HH. A 1,2-diacyl-sn-glycero-3-phospho-L-serine is bound by residues 383–388 and N448; that span reads LSRVVL. Position 503 (S503) interacts with a 1,2-diacyl-sn-glycero-3-phospho-L-serine. Over residues 660-684 the composition is skewed to basic and acidic residues; sequence GDQHKATQEKSVLEEAQRQRAREHQ. Disordered stretches follow at residues 660-685 and 739-798; these read GDQH…EHQQ and GQTT…GGES. A 1,2-diacyl-sn-glycero-3-phospho-(1D-myo-inositol 4-phosphate)-binding residues include K669, E673, and R677. 2 positions are modified to phosphoserine: S746 and S749. Residues 754–764 show a composition bias toward basic and acidic residues; sequence PSSDRRLRKAS. Positions 765–782 are enriched in polar residues; that stretch reads DQPSGHSQVTESSGSTPE. Residues 855 to 873 form a helical membrane-spanning segment; that stretch reads SWFLLCIFLTCQLFINYIL.

This sequence belongs to the OSBP family.

Its subcellular location is the endoplasmic reticulum membrane. Its function is as follows. Lipid transporter involved in lipid countertransport between the endoplasmic reticulum and the plasma membrane: specifically exchanges phosphatidylserine with phosphatidylinositol 4-phosphate (PI4P), delivering phosphatidylserine to the plasma membrane in exchange for PI4P, which is degraded by the SAC1/SACM1L phosphatase in the endoplasmic reticulum. Binds phosphatidylserine and PI4P in a mutually exclusive manner. May cooperate with NPC1 to mediate the exit of cholesterol from endosomes/lysosomes. Binds 25-hydroxycholesterol and cholesterol. This Mus musculus (Mouse) protein is Oxysterol-binding protein-related protein 5 (Osbpl5).